We begin with the raw amino-acid sequence, 749 residues long: Chaperone protein dnaK3 (749 aa).

Thr-198 is modified (phosphothreonine; by autocatalysis). Composition is skewed to basic and acidic residues over residues 643–653 (RWDADPWDRSR), 661–694 (YDDRRSPVSDPYRGERWVEEQTSMSRREPVRDRN), and 711–724 (PTWEEDQPPRRDRS). The segment at 643-749 (RWDADPWDRS…GWDDDDDEWF (107 aa)) is disordered. Positions 740–749 (GWDDDDDEWF) are enriched in acidic residues.

Belongs to the heat shock protein 70 family.

In terms of biological role, acts as a chaperone. The chain is Chaperone protein dnaK3 (dnaK3) from Synechococcus elongatus (strain ATCC 33912 / PCC 7942 / FACHB-805) (Anacystis nidulans R2).